The chain runs to 459 residues: tRNA(Ile)-lysidine synthase (459 aa).

ATP is bound at residue 38-43 (SGGMDS).

The protein belongs to the tRNA(Ile)-lysidine synthase family.

It is found in the cytoplasm. The catalysed reaction is cytidine(34) in tRNA(Ile2) + L-lysine + ATP = lysidine(34) in tRNA(Ile2) + AMP + diphosphate + H(+). In terms of biological role, ligates lysine onto the cytidine present at position 34 of the AUA codon-specific tRNA(Ile) that contains the anticodon CAU, in an ATP-dependent manner. Cytidine is converted to lysidine, thus changing the amino acid specificity of the tRNA from methionine to isoleucine. The chain is tRNA(Ile)-lysidine synthase from Acinetobacter baylyi (strain ATCC 33305 / BD413 / ADP1).